The following is a 193-amino-acid chain: Ion-translocating oxidoreductase complex subunit A (193 aa).

Transmembrane regions (helical) follow at residues 5-25, 39-59, 62-82, 102-122, 134-154, and 171-191; these read LMLF…FLGL, LGMG…AWLI, FILL…FIIA, LLGI…VALL, ALYG…FAAI, and SIAL…TGLV.

Belongs to the NqrDE/RnfAE family. The complex is composed of six subunits: RnfA, RnfB, RnfC, RnfD, RnfE and RnfG.

Its subcellular location is the cell inner membrane. Functionally, part of a membrane-bound complex that couples electron transfer with translocation of ions across the membrane. This is Ion-translocating oxidoreductase complex subunit A from Sodalis glossinidius (strain morsitans).